The sequence spans 137 residues: Large ribosomal subunit protein uL16c (137 aa).

A disordered region spans residues methionine 1 to alanine 21.

The protein belongs to the universal ribosomal protein uL16 family. As to quaternary structure, part of the 50S ribosomal subunit.

It localises to the plastid. It is found in the chloroplast. In Oedogonium cardiacum (Filamentous green alga), this protein is Large ribosomal subunit protein uL16c.